The following is a 671-amino-acid chain: Anti-sigma-I factor RsgI2 (671 aa).

At 1-57 (MSHYTGIILKLESDRAIVLTDGLDFMELKLKPGMQRGQHVIFDESDLYSAGLITRYK) the chain is on the cytoplasmic side. In terms of domain architecture, RsgI N-terminal anti-sigma spans 4–51 (YTGIILKLESDRAIVLTDGLDFMELKLKPGMQRGQHVIFDESDLYSAG). Residues 58 to 78 (SIIMPFSAFAAAAAVFLVILF) form a helical membrane-spanning segment. At 79-671 (SLRFVSISQE…SGTLYWGIEP (593 aa)) the chain is on the extracellular side. Disordered regions lie at residues 290-323 (TEAQPVDIPKSSPTPASFTAHVPTPPKTPSIPHT) and 359-505 (PVPV…APTE). Low complexity predominate over residues 359 to 379 (PVPVSTPKPVSTPAYSSTPTP). The segment covering 380-400 (ESTPVPVSTPKPASTPTPAST) has biased composition (pro residues). Residues 401–425 (PKPVSTPTHVSTPKPISTPTSTPRP) are compositionally biased toward low complexity. A compositionally biased stretch (pro residues) spans 426-446 (ASTPKPTSTPTPESTPKPTST). Low complexity predominate over residues 447-491 (PAPVSTPTSTPIPTYTSTPASTPIPAYTSTPTSIPTLTPATSPAP). Positions 492 to 502 (TSSPTPIPSPA) are enriched in pro residues. One can recognise a CBM3 domain in the interval 508–671 (LLTKIELQAY…SGTLYWGIEP (164 aa)). The Ca(2+) site is built by Thr-554, Asp-556, Asp-637, Ser-640, and Asp-641.

In terms of assembly, interacts (via RsgI N-terminal anti-sigma domain) with SigI2.

The protein localises to the cell membrane. Its function is as follows. Anti-sigma factor for SigI2. Negatively regulates SigI2 activity through direct interaction. Binding of the polysaccharide substrate to the extracellular C-terminal sensing domain of RsgI2 may induce a conformational change in its N-terminal cytoplasmic region, leading to the release and activation of SigI2. In Acetivibrio thermocellus (strain ATCC 27405 / DSM 1237 / JCM 9322 / NBRC 103400 / NCIMB 10682 / NRRL B-4536 / VPI 7372) (Clostridium thermocellum), this protein is Anti-sigma-I factor RsgI2.